We begin with the raw amino-acid sequence, 607 residues long: Elongation factor 4 (607 aa).

A tr-type G domain is found at 11 to 193 (SRIRNFSIIA…QVVEKVPAPA (183 aa)). GTP contacts are provided by residues 23-28 (DHGKST) and 140-143 (NKID).

This sequence belongs to the TRAFAC class translation factor GTPase superfamily. Classic translation factor GTPase family. LepA subfamily.

Its subcellular location is the cell membrane. It catalyses the reaction GTP + H2O = GDP + phosphate + H(+). Its function is as follows. Required for accurate and efficient protein synthesis under certain stress conditions. May act as a fidelity factor of the translation reaction, by catalyzing a one-codon backward translocation of tRNAs on improperly translocated ribosomes. Back-translocation proceeds from a post-translocation (POST) complex to a pre-translocation (PRE) complex, thus giving elongation factor G a second chance to translocate the tRNAs correctly. Binds to ribosomes in a GTP-dependent manner. The polypeptide is Elongation factor 4 (Shouchella clausii (strain KSM-K16) (Alkalihalobacillus clausii)).